A 576-amino-acid polypeptide reads, in one-letter code: Arginine--tRNA ligase (576 aa).

A 'HIGH' region motif is present at residues 121 to 131 (PNLAKEMHVGH).

The protein belongs to the class-I aminoacyl-tRNA synthetase family. In terms of assembly, monomer.

The protein resides in the cytoplasm. The enzyme catalyses tRNA(Arg) + L-arginine + ATP = L-arginyl-tRNA(Arg) + AMP + diphosphate. The polypeptide is Arginine--tRNA ligase (Alteromonas mediterranea (strain DSM 17117 / CIP 110805 / LMG 28347 / Deep ecotype)).